A 226-amino-acid polypeptide reads, in one-letter code: Orotate phosphoribosyltransferase (226 aa).

5-phospho-alpha-D-ribose 1-diphosphate-binding positions include Lys-26, 73-74, Arg-100, Lys-101, Lys-104, His-106, and 128-136; these read YK and EDVTTSGKS. Orotate-binding residues include Thr-132 and Arg-161.

Belongs to the purine/pyrimidine phosphoribosyltransferase family. PyrE subfamily. In terms of assembly, homodimer. The cofactor is Mg(2+).

The catalysed reaction is orotidine 5'-phosphate + diphosphate = orotate + 5-phospho-alpha-D-ribose 1-diphosphate. It functions in the pathway pyrimidine metabolism; UMP biosynthesis via de novo pathway; UMP from orotate: step 1/2. Functionally, catalyzes the transfer of a ribosyl phosphate group from 5-phosphoribose 1-diphosphate to orotate, leading to the formation of orotidine monophosphate (OMP). This is Orotate phosphoribosyltransferase from Agathobacter rectalis (strain ATCC 33656 / DSM 3377 / JCM 17463 / KCTC 5835 / VPI 0990) (Eubacterium rectale).